Here is a 794-residue protein sequence, read N- to C-terminus: MTEQKKTTIGITGMTCAACANRIEKNLNKLDDVEANVNVTTEKATISYNPESTSADDLTKTIEKTGYGVLNETAELDVIGMTCAACSNRIEKVLNRTDGVDQATVNLTTENATISYNPSATSVDALIKKIQKIGYDAQPKKEVAEKSSQKELELRSKLVKLIISAVLAAPLLLTMLVHLFGIQIPSIFMNPWFQFILATPVQFIIGWQFYVGAYKNLRNGSANMDVLVALGTSAAYFYSLYEMVKWLFNANVMPHLYFETSAVLITLILFGKYLETRAKTQTTNALSELLNLQAKEARVLRDNKEQMIPLNDVVEGDYLIIKPGEKIPVDGKIIKGKTSIDESMLTGESMPVEKVQDDNVIGSTMNKNGSITVKATKVGKDTALASIIKVVEEAQGSKAPIQRLADVISGYFVPIVVGIAVLTFIIWIAFVQQGQFEPALVAAIAVLVIACPCALGLATPTSIMVGTGKAAENGILFKGGEHIERTHQIDTVVLDKTGTITNGKPVVTDFDGDEEALQLLASAEKGSEHPLADAIVNYAQTMNIKLLDTTDFEAVPGRGIKANISGKNLIVGNRQFMNDENVDIKDSEDIMTQFEKSGKTAMLIAINQEYRGMVAVADTVKDSTATAIKQLHDLNIKVVMLTGDNERTAQAIANEVGIDTIIAQVLPEEKAAKIKSLQTQDKTIAMVGDGVNDAPALVQADIGIAIGTGTEVAIEAADVTILGGDLLLIPKAIKASKATIRNIRQNLFWAFGYNVAGIPIAALGLLAPWIAGAAMALSSVSVVTNALRLKRMKL.

2 consecutive HMA domains span residues 5–70 (KKTT…YGVL) and 72–138 (ETAE…YDAQ). Cys-16, Cys-19, Cys-83, and Cys-86 together coordinate Cu(+). A run of 6 helical transmembrane segments spans residues 162-182 (IISA…LFGI), 187-207 (IFMN…IIGW), 224-244 (MDVL…YEMV), 250-270 (ANVM…LILF), 411-431 (YFVP…IAFV), and 438-458 (PALV…LGLA). The 4-aspartylphosphate intermediate role is filled by Asp-495. Mg(2+) is bound by residues Asp-689 and Asp-693. Helical transmembrane passes span 747–766 (LFWA…LGLL) and 770–789 (IAGA…ALRL).

It belongs to the cation transport ATPase (P-type) (TC 3.A.3) family. Type IB subfamily.

Its subcellular location is the cell membrane. It carries out the reaction Cu(+)(in) + ATP + H2O = Cu(+)(out) + ADP + phosphate + H(+). Its function is as follows. Involved in copper export. This chain is Copper-exporting P-type ATPase (copA), found in Staphylococcus saprophyticus subsp. saprophyticus (strain ATCC 15305 / DSM 20229 / NCIMB 8711 / NCTC 7292 / S-41).